The following is a 254-amino-acid chain: Coproheme decarboxylase (254 aa).

Residues arginine 136, 150 to 154 (YPMDK), histidine 177, glutamine 190, and serine 228 each bind Fe-coproporphyrin III. Tyrosine 150 is an active-site residue.

Belongs to the ChdC family. Type 1 subfamily. Fe-coproporphyrin III is required as a cofactor.

It catalyses the reaction Fe-coproporphyrin III + 2 H2O2 + 2 H(+) = heme b + 2 CO2 + 4 H2O. It carries out the reaction Fe-coproporphyrin III + H2O2 + H(+) = harderoheme III + CO2 + 2 H2O. The enzyme catalyses harderoheme III + H2O2 + H(+) = heme b + CO2 + 2 H2O. The protein operates within porphyrin-containing compound metabolism; protoheme biosynthesis. Functionally, involved in coproporphyrin-dependent heme b biosynthesis. Catalyzes the decarboxylation of Fe-coproporphyrin III (coproheme) to heme b (protoheme IX), the last step of the pathway. The reaction occurs in a stepwise manner with a three-propionate intermediate. The polypeptide is Coproheme decarboxylase (Bacillus licheniformis (strain ATCC 14580 / DSM 13 / JCM 2505 / CCUG 7422 / NBRC 12200 / NCIMB 9375 / NCTC 10341 / NRRL NRS-1264 / Gibson 46)).